Consider the following 130-residue polypeptide: Protein ApaG (130 aa).

The ApaG domain maps to 3–127 (RAVTRHIEVT…FSLDSPDGKR (125 aa)).

This is Protein ApaG from Bradyrhizobium sp. (strain ORS 278).